The sequence spans 277 residues: Undecaprenyl-diphosphatase (277 aa).

Transmembrane regions (helical) follow at residues 47–67 (FNII…RGKI), 85–105 (ANLL…ADLI), 108–128 (WLFN…VMLW), 187–207 (FSFF…GYVY), 218–238 (VFAV…RALL), and 249–269 (FAWY…FHLI).

It belongs to the UppP family.

Its subcellular location is the cell inner membrane. It carries out the reaction di-trans,octa-cis-undecaprenyl diphosphate + H2O = di-trans,octa-cis-undecaprenyl phosphate + phosphate + H(+). Catalyzes the dephosphorylation of undecaprenyl diphosphate (UPP). Confers resistance to bacitracin. In Pseudomonas aeruginosa (strain ATCC 15692 / DSM 22644 / CIP 104116 / JCM 14847 / LMG 12228 / 1C / PRS 101 / PAO1), this protein is Undecaprenyl-diphosphatase.